The sequence spans 374 residues: Putative C-&gt;U-editing enzyme APOBEC-4 (374 aa).

The 117-residue stretch at 60–176 (PQTKHLTFYE…AWNRKALQSL (117 aa)) folds into the CMP/dCMP-type deaminase domain. Position 92 (His92) interacts with Zn(2+). Glu94 serves as the catalytic Proton donor. The Zn(2+) site is built by Cys126 and Cys133. Residues 259–280 (EKHPLGSAAPAQRQPTRGQDPR) form a disordered region.

It belongs to the cytidine and deoxycytidylate deaminase family. Zn(2+) serves as cofactor. In terms of tissue distribution, predominantly expressed in testis.

Functionally, putative C to U editing enzyme whose physiological substrate is not yet known. This Mus musculus (Mouse) protein is Putative C-&gt;U-editing enzyme APOBEC-4 (Apobec4).